The chain runs to 435 residues: Glutamine synthetase (435 aa).

The region spanning 12–94 (KSIKYFMISY…VAADCVMDDR (83 aa)) is the GS beta-grasp domain. The GS catalytic domain maps to 100 to 435 (PRVVLKRLVA…QWERDSTLDI (336 aa)). Glu123, Glu125, Glu180, and Glu187 together coordinate Mg(2+). Residue Gly232 participates in L-glutamate binding. A Mg(2+)-binding site is contributed by His236. Ser240 provides a ligand contact to ATP. Residues Arg291 and Arg315 each coordinate L-glutamate. Positions 315 and 320 each coordinate ATP. Position 328 (Glu328) interacts with Mg(2+). Position 330 (Arg330) interacts with L-glutamate.

The protein belongs to the glutamine synthetase family. Homooctamer. It depends on Mg(2+) as a cofactor.

The catalysed reaction is L-glutamate + NH4(+) + ATP = L-glutamine + ADP + phosphate + H(+). In terms of biological role, catalyzes the ATP-dependent biosynthesis of glutamine from glutamate and ammonia. The chain is Glutamine synthetase from Rhizobium leguminosarum bv. phaseoli.